We begin with the raw amino-acid sequence, 78 residues long: Probable [Fe-S]-dependent transcriptional repressor (78 aa).

Positions 56, 61, 64, and 70 each coordinate iron-sulfur cluster.

It belongs to the FeoC family.

Functionally, may function as a transcriptional regulator that controls feoABC expression. The polypeptide is Probable [Fe-S]-dependent transcriptional repressor (Escherichia coli O9:H4 (strain HS)).